The following is a 542-amino-acid chain: Chaperonin GroEL (542 aa).

Residues 29–32 (TLGP), 86–90 (DGTTT), Gly413, 476–478 (NAA), and Asp492 each bind ATP. The segment at 521-542 (QPDENGPAAGPDMGMGGMGGMM) is disordered. Over residues 533 to 542 (MGMGGMGGMM) the composition is skewed to gly residues.

This sequence belongs to the chaperonin (HSP60) family. In terms of assembly, forms a cylinder of 14 subunits composed of two heptameric rings stacked back-to-back. Interacts with the co-chaperonin GroES.

The protein resides in the cytoplasm. It carries out the reaction ATP + H2O + a folded polypeptide = ADP + phosphate + an unfolded polypeptide.. Together with its co-chaperonin GroES, plays an essential role in assisting protein folding. The GroEL-GroES system forms a nano-cage that allows encapsulation of the non-native substrate proteins and provides a physical environment optimized to promote and accelerate protein folding. The polypeptide is Chaperonin GroEL (Listeria innocua serovar 6a (strain ATCC BAA-680 / CLIP 11262)).